A 1357-amino-acid polypeptide reads, in one-letter code: DNA-directed RNA polymerase subunit beta (1357 aa).

This sequence belongs to the RNA polymerase beta chain family. The RNAP catalytic core consists of 2 alpha, 1 beta, 1 beta' and 1 omega subunit. When a sigma factor is associated with the core the holoenzyme is formed, which can initiate transcription.

The enzyme catalyses RNA(n) + a ribonucleoside 5'-triphosphate = RNA(n+1) + diphosphate. Its function is as follows. DNA-dependent RNA polymerase catalyzes the transcription of DNA into RNA using the four ribonucleoside triphosphates as substrates. The sequence is that of DNA-directed RNA polymerase subunit beta from Nitrosospira multiformis (strain ATCC 25196 / NCIMB 11849 / C 71).